The primary structure comprises 288 residues: POU domain class 2-associating factor 2 (288 aa).

In terms of domain architecture, OCA spans Lys10–Gly32. Disordered regions lie at residues Asp24–Gln52 and Pro247–Asp274. The span at Ser35–Ser48 shows a compositional bias: low complexity.

The protein belongs to the POU2AF family. Interacts with POU2F3 (via the POU domain) in a DNA-dependent manner; this interaction recruits POU2AF2 to chromatin and increases POU2F3 transactivation activity. Expressed in tuft cells of colon mucosa, as well as in small intestine and thymus.

It localises to the cytoplasm. The protein resides in the cytosol. It is found in the nucleus. Functionally, transcriptional coactivator of POU2F3. This complex drives the development of tuft cells, a rare chemosensory cells that coordinate immune and neural functions within mucosal epithelial tissues. In Homo sapiens (Human), this protein is POU domain class 2-associating factor 2.